Here is a 335-residue protein sequence, read N- to C-terminus: Ketol-acid reductoisomerase (NADP(+)) (335 aa).

Positions 5-185 constitute a KARI N-terminal Rossmann domain; the sequence is SKIYTDKDSN…GATRAGVIPT (181 aa). NADP(+)-binding positions include 28 to 31, S56, and 86 to 89; these read YGSQ and DMVQ. H111 is a catalytic residue. G137 is an NADP(+) binding site. The KARI C-terminal knotted domain occupies 186-331; that stretch reads TFKEETETDL…NQLKDLIQKG (146 aa). The Mg(2+) site is built by D194, E198, E230, and E234. S255 lines the substrate pocket.

It belongs to the ketol-acid reductoisomerase family. Mg(2+) serves as cofactor.

The catalysed reaction is (2R)-2,3-dihydroxy-3-methylbutanoate + NADP(+) = (2S)-2-acetolactate + NADPH + H(+). The enzyme catalyses (2R,3R)-2,3-dihydroxy-3-methylpentanoate + NADP(+) = (S)-2-ethyl-2-hydroxy-3-oxobutanoate + NADPH + H(+). Its pathway is amino-acid biosynthesis; L-isoleucine biosynthesis; L-isoleucine from 2-oxobutanoate: step 2/4. It participates in amino-acid biosynthesis; L-valine biosynthesis; L-valine from pyruvate: step 2/4. Its function is as follows. Involved in the biosynthesis of branched-chain amino acids (BCAA). Catalyzes an alkyl-migration followed by a ketol-acid reduction of (S)-2-acetolactate (S2AL) to yield (R)-2,3-dihydroxy-isovalerate. In the isomerase reaction, S2AL is rearranged via a Mg-dependent methyl migration to produce 3-hydroxy-3-methyl-2-ketobutyrate (HMKB). In the reductase reaction, this 2-ketoacid undergoes a metal-dependent reduction by NADPH to yield (R)-2,3-dihydroxy-isovalerate. This Saccharolobus islandicus (strain L.S.2.15 / Lassen #1) (Sulfolobus islandicus) protein is Ketol-acid reductoisomerase (NADP(+)).